A 424-amino-acid chain; its full sequence is Serine--tRNA ligase (424 aa).

Position 230–232 (230–232 (TAE)) interacts with L-serine. ATP is bound at residue 261–263 (RSE). Glu284 lines the L-serine pocket. 348–351 (EISS) contributes to the ATP binding site. An L-serine-binding site is contributed by Ser384.

This sequence belongs to the class-II aminoacyl-tRNA synthetase family. Type-1 seryl-tRNA synthetase subfamily. In terms of assembly, homodimer. The tRNA molecule binds across the dimer.

The protein resides in the cytoplasm. It catalyses the reaction tRNA(Ser) + L-serine + ATP = L-seryl-tRNA(Ser) + AMP + diphosphate + H(+). The catalysed reaction is tRNA(Sec) + L-serine + ATP = L-seryl-tRNA(Sec) + AMP + diphosphate + H(+). It functions in the pathway aminoacyl-tRNA biosynthesis; selenocysteinyl-tRNA(Sec) biosynthesis; L-seryl-tRNA(Sec) from L-serine and tRNA(Sec): step 1/1. Functionally, catalyzes the attachment of serine to tRNA(Ser). Is also able to aminoacylate tRNA(Sec) with serine, to form the misacylated tRNA L-seryl-tRNA(Sec), which will be further converted into selenocysteinyl-tRNA(Sec). This Nitratidesulfovibrio vulgaris (strain ATCC 29579 / DSM 644 / CCUG 34227 / NCIMB 8303 / VKM B-1760 / Hildenborough) (Desulfovibrio vulgaris) protein is Serine--tRNA ligase.